Consider the following 482-residue polypeptide: Tripartite motif-containing protein 10 (482 aa).

An RING-type zinc finger spans residues 16–61 (CPICQGTLREPVTIDCGHNFCCVCLTRYLEIPCLDPGELPTCPLCK). The B box-type zinc-finger motif lies at 95–136 (EEEDVCLEHREKVYYFCEDDEMQLCVVCREAWEHRHHTVRFL). Residues Cys100, His103, Cys122, and His128 each contribute to the Zn(2+) site. A B30.2/SPRY domain is found at 293 to 482 (REMKTFLEKL…GRGSKFSLSS (190 aa)).

The protein belongs to the TRIM/RBCC family. Interacts with IFNAR1; this interaction prevents association of IFNAR1 with TYK2.

It is found in the cytoplasm. Its function is as follows. E3 ligase that plays an essential role in the differentiation and survival of terminal erythroid cells. May directly bind to PTEN and promote its ubiquitination, resulting in its proteasomal degradation and activation of hypertrophic signaling. In addition, plays a role in immune response regulation by repressing the phosphorylation of STAT1 and STAT2 in the interferon/JAK/STAT signaling pathway independent of its E3 ligase activity. Mechanistically, interacts with the intracellular domain of IFNAR1 and thereby inhibits the association of TYK2 and IFNAR1. The chain is Tripartite motif-containing protein 10 (TRIM10) from Sus scrofa (Pig).